Consider the following 453-residue polypeptide: Bifunctional protein GlmU (453 aa).

Positions 1–225 (MNIVILAAGT…EWETLGVNSK (225 aa)) are pyrophosphorylase. UDP-N-acetyl-alpha-D-glucosamine-binding positions include 6–9 (LAAG), K20, Q71, 76–77 (GT), 98–100 (YGD), G135, E150, N165, and N223. D100 contributes to the Mg(2+) binding site. N223 provides a ligand contact to Mg(2+). Positions 226-246 (AQLAELERIHQRNVADALLVD) are linker. The N-acetyltransferase stretch occupies residues 247-453 (GVTLADPARV…GYVRPVKKKS (207 aa)). R329 and K347 together coordinate UDP-N-acetyl-alpha-D-glucosamine. H359 (proton acceptor) is an active-site residue. Positions 362 and 373 each coordinate UDP-N-acetyl-alpha-D-glucosamine. Acetyl-CoA contacts are provided by residues A376, 382–383 (NY), S401, and A419.

The protein in the N-terminal section; belongs to the N-acetylglucosamine-1-phosphate uridyltransferase family. This sequence in the C-terminal section; belongs to the transferase hexapeptide repeat family. As to quaternary structure, homotrimer. Mg(2+) is required as a cofactor.

It localises to the cytoplasm. The enzyme catalyses alpha-D-glucosamine 1-phosphate + acetyl-CoA = N-acetyl-alpha-D-glucosamine 1-phosphate + CoA + H(+). It catalyses the reaction N-acetyl-alpha-D-glucosamine 1-phosphate + UTP + H(+) = UDP-N-acetyl-alpha-D-glucosamine + diphosphate. Its pathway is nucleotide-sugar biosynthesis; UDP-N-acetyl-alpha-D-glucosamine biosynthesis; N-acetyl-alpha-D-glucosamine 1-phosphate from alpha-D-glucosamine 6-phosphate (route II): step 2/2. The protein operates within nucleotide-sugar biosynthesis; UDP-N-acetyl-alpha-D-glucosamine biosynthesis; UDP-N-acetyl-alpha-D-glucosamine from N-acetyl-alpha-D-glucosamine 1-phosphate: step 1/1. It functions in the pathway bacterial outer membrane biogenesis; LPS lipid A biosynthesis. Catalyzes the last two sequential reactions in the de novo biosynthetic pathway for UDP-N-acetylglucosamine (UDP-GlcNAc). The C-terminal domain catalyzes the transfer of acetyl group from acetyl coenzyme A to glucosamine-1-phosphate (GlcN-1-P) to produce N-acetylglucosamine-1-phosphate (GlcNAc-1-P), which is converted into UDP-GlcNAc by the transfer of uridine 5-monophosphate (from uridine 5-triphosphate), a reaction catalyzed by the N-terminal domain. This Burkholderia orbicola (strain AU 1054) protein is Bifunctional protein GlmU.